The chain runs to 673 residues: Methionine--tRNA ligase (673 aa).

The short motif at 15 to 25 (PYANGPIHLGH) is the 'HIGH' region element. Residues C146, C149, C159, and C162 each contribute to the Zn(2+) site. Residues 332–336 (KMSKS) carry the 'KMSKS' region motif. ATP is bound at residue K335. The tRNA-binding domain maps to 572 to 673 (DFAKLDLRIA…EGAQPGMRVK (102 aa)).

This sequence belongs to the class-I aminoacyl-tRNA synthetase family. MetG type 1 subfamily. As to quaternary structure, homodimer. Zn(2+) serves as cofactor.

The protein resides in the cytoplasm. The enzyme catalyses tRNA(Met) + L-methionine + ATP = L-methionyl-tRNA(Met) + AMP + diphosphate. Functionally, is required not only for elongation of protein synthesis but also for the initiation of all mRNA translation through initiator tRNA(fMet) aminoacylation. This chain is Methionine--tRNA ligase, found in Shewanella loihica (strain ATCC BAA-1088 / PV-4).